Consider the following 143-residue polypeptide: Sirohydrochlorin cobaltochelatase (143 aa).

The Proton acceptor role is filled by His9. Residue His9 participates in Co(2+) binding. Position 9 (His9) interacts with Ni(2+). Residues Glu45 and 70-75 each bind substrate; that span reads LAHGIH. His75 is a binding site for Co(2+). His75 serves as a coordination point for Ni(2+).

It belongs to the CbiX family. CbiXS subfamily. In terms of assembly, homotetramer; dimer of dimers.

The catalysed reaction is Co-sirohydrochlorin + 2 H(+) = sirohydrochlorin + Co(2+). It carries out the reaction Ni-sirohydrochlorin + 2 H(+) = sirohydrochlorin + Ni(2+). It participates in cofactor biosynthesis; adenosylcobalamin biosynthesis; cob(II)yrinate a,c-diamide from sirohydrochlorin (anaerobic route): step 1/10. In terms of biological role, catalyzes the insertion of Co(2+) into sirohydrochlorin as part of the anaerobic pathway to cobalamin biosynthesis. Involved in the biosynthesis of the unique nickel-containing tetrapyrrole coenzyme F430, the prosthetic group of methyl-coenzyme M reductase (MCR), which plays a key role in methanogenesis and anaerobic methane oxidation. Catalyzes the insertion of Ni(2+) into sirohydrochlorin to yield Ni-sirohydrochlorin. The protein is Sirohydrochlorin cobaltochelatase of Methanocaldococcus jannaschii (strain ATCC 43067 / DSM 2661 / JAL-1 / JCM 10045 / NBRC 100440) (Methanococcus jannaschii).